The sequence spans 632 residues: Acyl-coenzyme A oxidase-like protein (632 aa).

376–381 (TGGMGY) serves as a coordination point for FAD.

Belongs to the acyl-CoA oxidase family. FAD is required as a cofactor.

This chain is Acyl-coenzyme A oxidase-like protein (Acoxl), found in Mus musculus (Mouse).